The primary structure comprises 232 residues: Large ribosomal subunit protein uL1 (232 aa).

Belongs to the universal ribosomal protein uL1 family. Part of the 50S ribosomal subunit.

Functionally, binds directly to 23S rRNA. The L1 stalk is quite mobile in the ribosome, and is involved in E site tRNA release. In terms of biological role, protein L1 is also a translational repressor protein, it controls the translation of the L11 operon by binding to its mRNA. This chain is Large ribosomal subunit protein uL1, found in Roseobacter denitrificans (strain ATCC 33942 / OCh 114) (Erythrobacter sp. (strain OCh 114)).